An 803-amino-acid polypeptide reads, in one-letter code: Bromodomain-containing protein 2 (803 aa).

M1 is subject to N-acetylmethionine. T6 carries the phosphothreonine modification. S37 carries the phosphoserine modification. A disordered region spans residues 53 to 73; that stretch reads ALQLTPANPPPPEVSNPKKPG. One can recognise a Bromo 1 domain in the interval 74–180; sequence RVTNQLQYLH…KIFLQKVASM (107 aa). Residues D112, Y155, N156, K157, D160, and D161 each coordinate a protein. Disordered stretches follow at residues 268-348, 456-652, and 739-803; these read PPAQ…KLSE, EPLE…KRQL, and EKRL…SDSG. Positions 285–298 are enriched in low complexity; sequence TTTPTPTAILAPGS. Phosphoserine is present on residues S298 and S301. A compositionally biased stretch (basic and acidic residues) spans 316-332; it reads VRRESGRPIKPPRKDLP. The region spanning 344 to 453 is the Bromo 2 domain; that stretch reads GKLSEQLKHC…DVFEFRYAKM (110 aa). Positions 481–515 are enriched in acidic residues; that stretch reads SSEESSSESSSEEEEEEDEDEEEEEEESESSDSEE. Basic residues predominate over residues 545 to 567; it reads KPKRKREKKEKKKKRKAEKHRGR. The short motif at 556-560 is the Nuclear localization signal element; sequence KKKRK. Residues 623-632 show a composition bias toward low complexity; the sequence is KTAPPALPAG. Residues 634–716 enclose the NET domain; that stretch reads DSEEEEESRP…SCLRKKPRKP (83 aa). Position 635 is a phosphoserine (S635). A compositionally biased stretch (basic and acidic residues) spans 641-652; it reads SRPMSYDEKRQL. Over residues 777-797 the composition is skewed to low complexity; sequence SASSSSSDSSSSSSSSSSSDT.

The protein belongs to the BET family. Homodimer. Interacts with E2F1. Interacts with (acetylated) STAT3; promoting STAT3 recruitment to chromatin. Interacts with CTCF; promoting BRD2 recruitment to chromatin.

The protein localises to the nucleus. It localises to the chromosome. Chromatin reader protein that specifically recognizes and binds histone H4 acetylated at 'Lys-5' and 'Lys-12' (H4K5ac and H4K12ac, respectively), thereby controlling gene expression and remodeling chromatin structures. Recruits transcription factors and coactivators to target gene sites, and activates RNA polymerase II machinery for transcriptional elongation. Plays a key role in genome compartmentalization via its association with CTCF and cohesin: recruited to chromatin by CTCF and promotes formation of topologically associating domains (TADs) via its ability to bind acetylated histones, contributing to CTCF boundary formation and enhancer insulation. Also recognizes and binds acetylated non-histone proteins, such as STAT3. Involved in inflammatory response by regulating differentiation of naive CD4(+) T-cells into T-helper Th17: recognizes and binds STAT3 acetylated at 'Lys-87', promoting STAT3 recruitment to chromatin. In addition to acetylated lysines, also recognizes and binds lysine residues on histones that are both methylated and acetylated on the same side chain to form N6-acetyl-N6-methyllysine (Kacme), an epigenetic mark of active chromatin associated with increased transcriptional initiation. Specifically binds histone H4 acetyl-methylated at 'Lys-5' and 'Lys-12' (H4K5acme and H4K12acme, respectively). This is Bromodomain-containing protein 2 (BRD2) from Bos taurus (Bovine).